Consider the following 340-residue polypeptide: Phenylalanine--tRNA ligase alpha subunit (340 aa).

Glu-255 contacts Mg(2+).

The protein belongs to the class-II aminoacyl-tRNA synthetase family. Phe-tRNA synthetase alpha subunit type 1 subfamily. In terms of assembly, tetramer of two alpha and two beta subunits. It depends on Mg(2+) as a cofactor.

Its subcellular location is the cytoplasm. The catalysed reaction is tRNA(Phe) + L-phenylalanine + ATP = L-phenylalanyl-tRNA(Phe) + AMP + diphosphate + H(+). This is Phenylalanine--tRNA ligase alpha subunit from Exiguobacterium sp. (strain ATCC BAA-1283 / AT1b).